The primary structure comprises 278 residues: Adenosylcobinamide-GDP ribazoletransferase (278 aa).

Helical transmembrane passes span Gly-44–Leu-64, Phe-69–Phe-89, Ala-121–Leu-141, Val-161–Trp-181, Gly-204–Leu-224, and Ile-227–Phe-247.

This sequence belongs to the CobS family. Requires Mg(2+) as cofactor.

Its subcellular location is the cell inner membrane. The catalysed reaction is alpha-ribazole + adenosylcob(III)inamide-GDP = adenosylcob(III)alamin + GMP + H(+). The enzyme catalyses alpha-ribazole 5'-phosphate + adenosylcob(III)inamide-GDP = adenosylcob(III)alamin 5'-phosphate + GMP + H(+). It participates in cofactor biosynthesis; adenosylcobalamin biosynthesis; adenosylcobalamin from cob(II)yrinate a,c-diamide: step 7/7. Joins adenosylcobinamide-GDP and alpha-ribazole to generate adenosylcobalamin (Ado-cobalamin). Also synthesizes adenosylcobalamin 5'-phosphate from adenosylcobinamide-GDP and alpha-ribazole 5'-phosphate. The chain is Adenosylcobinamide-GDP ribazoletransferase from Polaromonas naphthalenivorans (strain CJ2).